A 469-amino-acid chain; its full sequence is 3-isopropylmalate dehydratase large subunit (469 aa).

Positions 347, 408, and 411 each coordinate [4Fe-4S] cluster.

The protein belongs to the aconitase/IPM isomerase family. LeuC type 1 subfamily. In terms of assembly, heterodimer of LeuC and LeuD. [4Fe-4S] cluster serves as cofactor.

The enzyme catalyses (2R,3S)-3-isopropylmalate = (2S)-2-isopropylmalate. It participates in amino-acid biosynthesis; L-leucine biosynthesis; L-leucine from 3-methyl-2-oxobutanoate: step 2/4. Functionally, catalyzes the isomerization between 2-isopropylmalate and 3-isopropylmalate, via the formation of 2-isopropylmaleate. The polypeptide is 3-isopropylmalate dehydratase large subunit (Actinobacillus succinogenes (strain ATCC 55618 / DSM 22257 / CCUG 43843 / 130Z)).